A 182-amino-acid chain; its full sequence is Putative minor fimbrial subunit PmfF (182 aa).

Residues 1–22 form the signal peptide; the sequence is MKNSIIKSAITCLLLLSPSTFA.

The protein belongs to the fimbrial protein family.

It localises to the fimbrium. The sequence is that of Putative minor fimbrial subunit PmfF (pmfF) from Proteus mirabilis (strain HI4320).